The following is a 959-amino-acid chain: ATP-dependent 6-phosphofructokinase subunit beta (959 aa).

Residues 2-573 form an N-terminal catalytic PFK domain 1 region; sequence TVTTPFVNGT…HLNNFMAINS (572 aa). The segment at 144 to 167 is disordered; the sequence is KNAVSTKPTPPPAPEASAESGLSS. At Thr-152 the chain carries Phosphothreonine. The segment covering 158–167 has biased composition (low complexity); the sequence is EASAESGLSS. A phosphoserine mark is found at Ser-163 and Ser-171. Residues Gly-206, 270 to 271, and 300 to 303 each bind ATP; these read RC and GDGS. Residue Asp-301 participates in Mg(2+) binding. Beta-D-fructose 6-phosphate-binding positions include 346–348, Arg-383, 390–392, Glu-447, Arg-475, and 481–484; these read SID, MGR, and HVQR. Asp-348 (proton acceptor) is an active-site residue. Residues 574-587 form an interdomain linker region; sequence ADHNEPKLPKDKRL. The interval 588–959 is C-terminal regulatory PFK domain 2; it reads KIAIVNVGAP…DHLVGRKRVD (372 aa). Residues Arg-658, 716-720, Arg-754, and 761-763 contribute to the beta-D-fructose 2,6-bisphosphate site; these read TLSNN and QGG. A Phosphoserine modification is found at Ser-803. Beta-D-fructose 2,6-bisphosphate is bound by residues Lys-847, 853-856, and Arg-935; that span reads HVQQ.

It belongs to the phosphofructokinase type A (PFKA) family. ATP-dependent PFK group I subfamily. Eukaryotic two domain clade 'E' sub-subfamily. As to quaternary structure, heterooctamer of 4 alpha and 4 beta chains. It depends on Mg(2+) as a cofactor.

Its subcellular location is the cytoplasm. The protein resides in the mitochondrion outer membrane. The enzyme catalyses beta-D-fructose 6-phosphate + ATP = beta-D-fructose 1,6-bisphosphate + ADP + H(+). Its pathway is carbohydrate degradation; glycolysis; D-glyceraldehyde 3-phosphate and glycerone phosphate from D-glucose: step 3/4. Its activity is regulated as follows. Allosterically activated by ADP, AMP, or fructose 2,6-bisphosphate, and allosterically inhibited by ATP or citrate. In terms of biological role, catalyzes the phosphorylation of D-fructose 6-phosphate to fructose 1,6-bisphosphate by ATP, the first committing step of glycolysis. The polypeptide is ATP-dependent 6-phosphofructokinase subunit beta (PFK2) (Saccharomyces cerevisiae (strain ATCC 204508 / S288c) (Baker's yeast)).